A 33-amino-acid polypeptide reads, in one-letter code: Rugosin-B (33 aa).

An intrachain disulfide couples cysteine 27 to cysteine 33.

Belongs to the frog skin active peptide (FSAP) family. Brevinin subfamily. As to expression, expressed by the skin glands.

It localises to the secreted. In terms of biological role, shows antibacterial activity against both Gram-negative and Gram-positive bacteria. The chain is Rugosin-B from Glandirana rugosa (Japanese wrinkled frog).